The primary structure comprises 408 residues: Imidazolonepropionase (408 aa).

Positions 74 and 76 each coordinate Fe(3+). H74 and H76 together coordinate Zn(2+). Residues R83, Y146, and H179 each contribute to the 4-imidazolone-5-propanoate site. Y146 provides a ligand contact to N-formimidoyl-L-glutamate. Residue H244 coordinates Fe(3+). H244 serves as a coordination point for Zn(2+). Q247 is a 4-imidazolone-5-propanoate binding site. D319 is a Fe(3+) binding site. A Zn(2+)-binding site is contributed by D319. N321 and G323 together coordinate N-formimidoyl-L-glutamate. T324 is a 4-imidazolone-5-propanoate binding site.

Belongs to the metallo-dependent hydrolases superfamily. HutI family. Zn(2+) serves as cofactor. Requires Fe(3+) as cofactor.

It is found in the cytoplasm. The enzyme catalyses 4-imidazolone-5-propanoate + H2O = N-formimidoyl-L-glutamate. Its pathway is amino-acid degradation; L-histidine degradation into L-glutamate; N-formimidoyl-L-glutamate from L-histidine: step 3/3. Functionally, catalyzes the hydrolytic cleavage of the carbon-nitrogen bond in imidazolone-5-propanoate to yield N-formimidoyl-L-glutamate. It is the third step in the universal histidine degradation pathway. This is Imidazolonepropionase from Ralstonia nicotianae (strain ATCC BAA-1114 / GMI1000) (Ralstonia solanacearum).